The primary structure comprises 161 residues: Nucleotide-binding protein Pput_4372 (161 aa).

It belongs to the YajQ family.

In terms of biological role, nucleotide-binding protein. The polypeptide is Nucleotide-binding protein Pput_4372 (Pseudomonas putida (strain ATCC 700007 / DSM 6899 / JCM 31910 / BCRC 17059 / LMG 24140 / F1)).